A 188-amino-acid polypeptide reads, in one-letter code: Pyridoxal 5'-phosphate synthase subunit PdxT (188 aa).

46 to 48 (GES) provides a ligand contact to L-glutamine. Cys78 acts as the Nucleophile in catalysis. L-glutamine-binding positions include Arg106 and 132 to 133 (IR). Active-site charge relay system residues include His169 and Glu171.

Belongs to the glutaminase PdxT/SNO family. In the presence of PdxS, forms a dodecamer of heterodimers. Only shows activity in the heterodimer.

It catalyses the reaction aldehydo-D-ribose 5-phosphate + D-glyceraldehyde 3-phosphate + L-glutamine = pyridoxal 5'-phosphate + L-glutamate + phosphate + 3 H2O + H(+). The catalysed reaction is L-glutamine + H2O = L-glutamate + NH4(+). It participates in cofactor biosynthesis; pyridoxal 5'-phosphate biosynthesis. Catalyzes the hydrolysis of glutamine to glutamate and ammonia as part of the biosynthesis of pyridoxal 5'-phosphate. The resulting ammonia molecule is channeled to the active site of PdxS. The chain is Pyridoxal 5'-phosphate synthase subunit PdxT from Tropheryma whipplei (strain Twist) (Whipple's bacillus).